An 88-amino-acid chain; its full sequence is ATP synthase epsilon chain (88 aa).

Belongs to the ATPase epsilon chain family. As to quaternary structure, F-type ATPases have 2 components, CF(1) - the catalytic core - and CF(0) - the membrane proton channel. CF(1) has five subunits: alpha(3), beta(3), gamma(1), delta(1), epsilon(1). CF(0) has three main subunits: a, b and c.

It localises to the cell inner membrane. Produces ATP from ADP in the presence of a proton gradient across the membrane. This Chlorobaculum tepidum (strain ATCC 49652 / DSM 12025 / NBRC 103806 / TLS) (Chlorobium tepidum) protein is ATP synthase epsilon chain (atpC).